We begin with the raw amino-acid sequence, 311 residues long: Pyrimidine-specific ribonucleoside hydrolase RihA (311 aa).

The active site involves His-240.

This sequence belongs to the IUNH family. RihA subfamily.

Its function is as follows. Hydrolyzes cytidine or uridine to ribose and cytosine or uracil, respectively. The protein is Pyrimidine-specific ribonucleoside hydrolase RihA of Salmonella gallinarum (strain 287/91 / NCTC 13346).